Here is a 279-residue protein sequence, read N- to C-terminus: Thymidylate synthase (279 aa).

141–142 (RR) contributes to the dUMP binding site. Cysteine 161 acts as the Nucleophile in catalysis. Residues 181-184 (RSND), asparagine 192, and 222-224 (HVY) each bind dUMP. Aspartate 184 serves as a coordination point for (6R)-5,10-methylene-5,6,7,8-tetrahydrofolate. A (6R)-5,10-methylene-5,6,7,8-tetrahydrofolate-binding site is contributed by alanine 278.

It belongs to the thymidylate synthase family. Bacterial-type ThyA subfamily. As to quaternary structure, homodimer.

The protein resides in the cytoplasm. It carries out the reaction dUMP + (6R)-5,10-methylene-5,6,7,8-tetrahydrofolate = 7,8-dihydrofolate + dTMP. Its pathway is pyrimidine metabolism; dTTP biosynthesis. Its function is as follows. Catalyzes the reductive methylation of 2'-deoxyuridine-5'-monophosphate (dUMP) to 2'-deoxythymidine-5'-monophosphate (dTMP) while utilizing 5,10-methylenetetrahydrofolate (mTHF) as the methyl donor and reductant in the reaction, yielding dihydrofolate (DHF) as a by-product. This enzymatic reaction provides an intracellular de novo source of dTMP, an essential precursor for DNA biosynthesis. This Bacillus subtilis subsp. natto protein is Thymidylate synthase.